The sequence spans 253 residues: Leucyl/phenylalanyl-tRNA--protein transferase (253 aa).

This sequence belongs to the L/F-transferase family.

The protein localises to the cytoplasm. The enzyme catalyses N-terminal L-lysyl-[protein] + L-leucyl-tRNA(Leu) = N-terminal L-leucyl-L-lysyl-[protein] + tRNA(Leu) + H(+). It carries out the reaction N-terminal L-arginyl-[protein] + L-leucyl-tRNA(Leu) = N-terminal L-leucyl-L-arginyl-[protein] + tRNA(Leu) + H(+). It catalyses the reaction L-phenylalanyl-tRNA(Phe) + an N-terminal L-alpha-aminoacyl-[protein] = an N-terminal L-phenylalanyl-L-alpha-aminoacyl-[protein] + tRNA(Phe). Functions in the N-end rule pathway of protein degradation where it conjugates Leu, Phe and, less efficiently, Met from aminoacyl-tRNAs to the N-termini of proteins containing an N-terminal arginine or lysine. The protein is Leucyl/phenylalanyl-tRNA--protein transferase of Bordetella petrii (strain ATCC BAA-461 / DSM 12804 / CCUG 43448).